Reading from the N-terminus, the 180-residue chain is Large ribosomal subunit protein bL17 (180 aa).

A disordered region spans residues 134–180 (AQAKAKKAAAMPTEESEAKPAEEGDVVGASEPDAKAPEEPPTEAPEN).

Belongs to the bacterial ribosomal protein bL17 family. As to quaternary structure, part of the 50S ribosomal subunit. Contacts protein L32.

The chain is Large ribosomal subunit protein bL17 from Mycobacterium tuberculosis (strain CDC 1551 / Oshkosh).